We begin with the raw amino-acid sequence, 117 residues long: UPF0342 protein OB1136 (117 aa).

This sequence belongs to the UPF0342 family.

In Oceanobacillus iheyensis (strain DSM 14371 / CIP 107618 / JCM 11309 / KCTC 3954 / HTE831), this protein is UPF0342 protein OB1136.